The primary structure comprises 123 residues: Ribosome-binding factor A (123 aa).

This sequence belongs to the RbfA family. As to quaternary structure, monomer. Binds 30S ribosomal subunits, but not 50S ribosomal subunits or 70S ribosomes.

Its subcellular location is the cytoplasm. Functionally, one of several proteins that assist in the late maturation steps of the functional core of the 30S ribosomal subunit. Associates with free 30S ribosomal subunits (but not with 30S subunits that are part of 70S ribosomes or polysomes). Required for efficient processing of 16S rRNA. May interact with the 5'-terminal helix region of 16S rRNA. The chain is Ribosome-binding factor A from Variovorax paradoxus (strain S110).